Here is a 132-residue protein sequence, read N- to C-terminus: Small ribosomal subunit protein uS8 (132 aa).

It belongs to the universal ribosomal protein uS8 family. Part of the 30S ribosomal subunit. Contacts proteins S5 and S12.

Functionally, one of the primary rRNA binding proteins, it binds directly to 16S rRNA central domain where it helps coordinate assembly of the platform of the 30S subunit. The sequence is that of Small ribosomal subunit protein uS8 from Anoxybacillus flavithermus (strain DSM 21510 / WK1).